A 178-amino-acid chain; its full sequence is Transcription factor E (178 aa).

The HTH TFE/IIEalpha-type domain maps to 5-89 (AEELILSLAK…YWKVNIDQIN (85 aa)).

It belongs to the TFE family. In terms of assembly, monomer. Interaction with RNA polymerase subunits RpoF and RpoE is necessary for Tfe stimulatory transcription activity. Able to interact with Tbp and RNA polymerase in the absence of DNA promoter. Interacts both with the preinitiation and elongation complexes.

In terms of biological role, transcription factor that plays a role in the activation of archaeal genes transcribed by RNA polymerase. Facilitates transcription initiation by enhancing TATA-box recognition by TATA-box-binding protein (Tbp), and transcription factor B (Tfb) and RNA polymerase recruitment. Not absolutely required for transcription in vitro, but particularly important in cases where Tbp or Tfb function is not optimal. It dynamically alters the nucleic acid-binding properties of RNA polymerases by stabilizing the initiation complex and destabilizing elongation complexes. Seems to translocate with the RNA polymerase following initiation and acts by binding to the non template strand of the transcription bubble in elongation complexes. In Sulfurisphaera tokodaii (strain DSM 16993 / JCM 10545 / NBRC 100140 / 7) (Sulfolobus tokodaii), this protein is Transcription factor E.